A 204-amino-acid polypeptide reads, in one-letter code: Large ribosomal subunit protein eL15 (204 aa).

It belongs to the eukaryotic ribosomal protein eL15 family.

The polypeptide is Large ribosomal subunit protein eL15 (RpL15) (Anopheles gambiae (African malaria mosquito)).